A 556-amino-acid polypeptide reads, in one-letter code: 2-isopropylmalate synthase (556 aa).

The Pyruvate carboxyltransferase domain maps to 33 to 307; sequence PIWCSSDLRD…HPQLDFSDID (275 aa). Mg(2+) is bound by residues Asp-42, His-246, His-248, and Asn-282. The tract at residues 439-556 is regulatory domain; the sequence is ATSPYVLASH…AVTQAEAKAA (118 aa).

It belongs to the alpha-IPM synthase/homocitrate synthase family. LeuA type 2 subfamily. In terms of assembly, homodimer. Requires Mg(2+) as cofactor.

The protein localises to the cytoplasm. The catalysed reaction is 3-methyl-2-oxobutanoate + acetyl-CoA + H2O = (2S)-2-isopropylmalate + CoA + H(+). The protein operates within amino-acid biosynthesis; L-leucine biosynthesis; L-leucine from 3-methyl-2-oxobutanoate: step 1/4. Functionally, catalyzes the condensation of the acetyl group of acetyl-CoA with 3-methyl-2-oxobutanoate (2-ketoisovalerate) to form 3-carboxy-3-hydroxy-4-methylpentanoate (2-isopropylmalate). In Pseudomonas aeruginosa (strain ATCC 15692 / DSM 22644 / CIP 104116 / JCM 14847 / LMG 12228 / 1C / PRS 101 / PAO1), this protein is 2-isopropylmalate synthase.